The primary structure comprises 90 residues: Small ribosomal subunit protein uS19 (90 aa).

This sequence belongs to the universal ribosomal protein uS19 family.

Protein S19 forms a complex with S13 that binds strongly to the 16S ribosomal RNA. This Hydrogenovibrio crunogenus (strain DSM 25203 / XCL-2) (Thiomicrospira crunogena) protein is Small ribosomal subunit protein uS19.